The sequence spans 1413 residues: DNA-directed RNA polymerase subunit beta' (1413 aa).

Residues Cys70, Cys72, Cys85, and Cys88 each coordinate Zn(2+). Residues Asp460, Asp462, and Asp464 each coordinate Mg(2+). Cys819, Cys893, Cys900, and Cys903 together coordinate Zn(2+).

Belongs to the RNA polymerase beta' chain family. In terms of assembly, the RNAP catalytic core consists of 2 alpha, 1 beta, 1 beta' and 1 omega subunit. When a sigma factor is associated with the core the holoenzyme is formed, which can initiate transcription. It depends on Mg(2+) as a cofactor. Zn(2+) is required as a cofactor.

The enzyme catalyses RNA(n) + a ribonucleoside 5'-triphosphate = RNA(n+1) + diphosphate. Functionally, DNA-dependent RNA polymerase catalyzes the transcription of DNA into RNA using the four ribonucleoside triphosphates as substrates. The chain is DNA-directed RNA polymerase subunit beta' from Burkholderia vietnamiensis (strain G4 / LMG 22486) (Burkholderia cepacia (strain R1808)).